A 530-amino-acid chain; its full sequence is GMP synthase [glutamine-hydrolyzing] (530 aa).

The 190-residue stretch at 18–207 (TILVLDFGSQ…AVDICQAKTN (190 aa)) folds into the Glutamine amidotransferase type-1 domain. The Nucleophile role is filled by cysteine 94. Residues histidine 181 and glutamate 183 contribute to the active site. Residues 208 to 405 (WSMENFIDTE…LGVPEDLVWR (198 aa)) form the GMPS ATP-PPase domain. 236-242 (SGGVDST) provides a ligand contact to ATP. Positions 309, 467, 522, and 528 each coordinate XMP.

In terms of assembly, homodimer. The cofactor is Mg(2+).

The protein localises to the cytoplasm. It is found in the cytosol. It carries out the reaction XMP + L-glutamine + ATP + H2O = GMP + L-glutamate + AMP + diphosphate + 2 H(+). Its pathway is purine metabolism; GMP biosynthesis; GMP from XMP (L-Gln route): step 1/1. Catalyzes the conversion of xanthine monophosphate (XMP) to GMP in the presence of glutamine and ATP through an adenyl-XMP intermediate. This is GMP synthase [glutamine-hydrolyzing] (GUA1) from Candida albicans (strain SC5314 / ATCC MYA-2876) (Yeast).